Consider the following 537-residue polypeptide: Phosphoenolpyruvate carboxykinase (ATP) (537 aa).

The substrate site is built by Arg61, Tyr195, and Lys201. ATP-binding positions include Lys201, His220, and 236-244 (GLSGTGKTT). 2 residues coordinate Mn(2+): Lys201 and His220. Mn(2+) is bound at residue Asp257. Residue Glu285 coordinates ATP. Over residues 312-321 (DFNDGSKTEN) the composition is skewed to basic and acidic residues. The tract at residues 312-339 (DFNDGSKTENTRSAYPLESIPNASPTGR) is disordered. Residue Arg323 participates in substrate binding. ATP-binding residues include Arg323 and Thr448.

It belongs to the phosphoenolpyruvate carboxykinase (ATP) family. Mn(2+) serves as cofactor.

Its subcellular location is the cytoplasm. It catalyses the reaction oxaloacetate + ATP = phosphoenolpyruvate + ADP + CO2. The protein operates within carbohydrate biosynthesis; gluconeogenesis. Its function is as follows. Involved in the gluconeogenesis. Catalyzes the conversion of oxaloacetate (OAA) to phosphoenolpyruvate (PEP) through direct phosphoryl transfer between the nucleoside triphosphate and OAA. This chain is Phosphoenolpyruvate carboxykinase (ATP), found in Rhodopseudomonas palustris (strain BisB18).